The following is a 107-amino-acid chain: Sulfurtransferase Alvin_2599 (107 aa).

Residues 16 to 104 form the Rhodanese domain; that stretch reads DTEDVLLVDI…WARHGLPIVA (89 aa). The active-site Cysteine persulfide intermediate is Cys-64.

Monomer.

It is found in the cytoplasm. It participates in energy metabolism; sulfur metabolism. Its function is as follows. Sulfur carrier protein involved in sulfur trafficking for oxidative dissimilatory sulfur metabolism. Component of a sulfur relay system that starts with the sulfur-mobilizing rhodanese-like protein Rhd_2599 (Alvin_2599), which transfers the sulfur from a low-molecular-weight thiol, maybe glutathione, to the TusA protein (Alvin_2600); TusA serves as the sulfur donor for DsrEFH, which persulfurates DsrC; persulfurated DsrC very probably serves as a direct substrate for reverse-acting sulfite reductase, DsrAB. Is able to catalyze the sulfur transfer reaction from thiosulfate or glutathione (GSSH) to cyanide in vitro, however, thiosulfate is unlikely an in vivo substrate. In Allochromatium vinosum (strain ATCC 17899 / DSM 180 / NBRC 103801 / NCIMB 10441 / D) (Chromatium vinosum), this protein is Sulfurtransferase Alvin_2599.